The following is a 432-amino-acid chain: Monoacylglycerol lipase ABHD2 (432 aa).

Residues 1 to 14 (MNTHESEVYTVAPE) lie on the Cytoplasmic side of the membrane. Residues 15 to 35 (MPAMFDGMKLAAVATVLYVIV) form a helical; Signal-anchor for type II membrane protein membrane-spanning segment. Over 36 to 432 (RCLNLKSPTA…NQTTCQENTS (397 aa)) the chain is Extracellular. Residues 132–383 (TMVICPGIGN…HGGHLGFFEG (252 aa)) enclose the AB hydrolase-1 domain. An N-linked (GlcNAc...) asparagine glycan is attached at N141. Catalysis depends on S212, which acts as the Nucleophile. An N-linked (GlcNAc...) asparagine glycan is attached at N225. Catalysis depends on charge relay system residues D346 and H377. A disordered region spans residues 413–432 (PPCQSKDAQSNQTTCQENTS). A compositionally biased stretch (polar residues) spans 418-432 (KDAQSNQTTCQENTS). Residue N423 is glycosylated (N-linked (GlcNAc...) asparagine).

This sequence belongs to the AB hydrolase superfamily. AB hydrolase 4 family.

It is found in the cell membrane. It catalyses the reaction Hydrolyzes glycerol monoesters of long-chain fatty acids.. It carries out the reaction an acetyl ester + H2O = an aliphatic alcohol + acetate + H(+). The enzyme catalyses a triacylglycerol + H2O = a diacylglycerol + a fatty acid + H(+). The catalysed reaction is 2-(5Z,8Z,11Z,14Z-eicosatetraenoyl)-glycerol + H2O = glycerol + (5Z,8Z,11Z,14Z)-eicosatetraenoate + H(+). It catalyses the reaction a butanoate ester + H2O = an aliphatic alcohol + butanoate + H(+). It carries out the reaction hexadecanoate ester + H2O = an aliphatic alcohol + hexadecanoate + H(+). With respect to regulation, acylglycerol lipase activity is activated upon binding to progesterone. Functionally, progesterone-dependent acylglycerol lipase that catalyzes hydrolysis of endocannabinoid arachidonoylglycerol (AG) from cell membrane. Acts as a progesterone receptor: progesterone-binding activates the acylglycerol lipase activity, mediating degradation of 1-arachidonoylglycerol (1AG) and 2-arachidonoylglycerol (2AG) to glycerol and arachidonic acid (AA). Also displays an ester hydrolase activity against acetyl ester, butanoate ester and hexadecanoate ester. Plays a key role in sperm capacitation in response to progesterone by mediating degradation of 2AG, an inhibitor of the sperm calcium channel CatSper, leading to calcium influx via CatSper and sperm activation. May also play a role in smooth muscle cells migration. This Danio rerio (Zebrafish) protein is Monoacylglycerol lipase ABHD2 (abhd2a).